The primary structure comprises 248 residues: Triosephosphate isomerase A (248 aa).

2 residues coordinate substrate: Asn11 and Lys13. The Electrophile role is filled by His95. The active-site Proton acceptor is the Glu165.

This sequence belongs to the triosephosphate isomerase family. Homodimer.

It localises to the cytoplasm. It carries out the reaction dihydroxyacetone phosphate = methylglyoxal + phosphate. The enzyme catalyses D-glyceraldehyde 3-phosphate = dihydroxyacetone phosphate. It functions in the pathway carbohydrate degradation; glycolysis; D-glyceraldehyde 3-phosphate from glycerone phosphate: step 1/1. The protein operates within carbohydrate biosynthesis; gluconeogenesis. Its function is as follows. Triosephosphate isomerase is an extremely efficient metabolic enzyme that catalyzes the interconversion between dihydroxyacetone phosphate (DHAP) and D-glyceraldehyde-3-phosphate (G3P) in glycolysis and gluconeogenesis. It is also responsible for the non-negligible production of methylglyoxal a reactive cytotoxic side-product that modifies and can alter proteins, DNA and lipids. The chain is Triosephosphate isomerase A (tpi1a) from Danio rerio (Zebrafish).